Reading from the N-terminus, the 152-residue chain is UPF0266 membrane protein plu2700 (152 aa).

The next 3 helical transmembrane spans lie at 6-26, 45-65, and 67-87; these read IALT…EFVV, IDAL…ITVY, and SRLT…IAYI.

Belongs to the UPF0266 family.

It localises to the cell inner membrane. The chain is UPF0266 membrane protein plu2700 from Photorhabdus laumondii subsp. laumondii (strain DSM 15139 / CIP 105565 / TT01) (Photorhabdus luminescens subsp. laumondii).